The sequence spans 271 residues: uncharacterized protein (271 aa).

This sequence belongs to the HAD-like hydrolase superfamily.

This is an uncharacterized protein from Staphylococcus aureus (strain Mu50 / ATCC 700699).